The sequence spans 157 residues: MDYTIEHVLTRKIAGFHLVGPWEKTVPQGFEQLTLWVDNFHIQPQAWLAVYYDNPQQVAPEKLRADTVVEVPADFTLPENSVGVILTDLPGGQYAVARARVENHDFGTPWLAFFTRLHQDVRYQMAARPCFEIYLNDGKRDGYWEIDMYIPVQTSGE.

This sequence belongs to the DNA gyrase inhibitor family. As to quaternary structure, interacts with DNA gyrase.

It is found in the cytoplasm. Functionally, inhibits the supercoiling activity of DNA gyrase. Acts by inhibiting DNA gyrase at an early step, prior to (or at the step of) binding of DNA by the gyrase. It protects cells against toxins that target DNA gyrase, by inhibiting activity of these toxins and reducing the formation of lethal double-strand breaks in the cell. In Cronobacter turicensis (strain DSM 18703 / CCUG 55852 / LMG 23827 / z3032), this protein is DNA gyrase inhibitor.